We begin with the raw amino-acid sequence, 729 residues long: Fatty acid oxidation complex subunit alpha (729 aa).

The tract at residues 1–189 (MLYKGDTLYL…KVGLVDAVVK (189 aa)) is enoyl-CoA hydratase/isomerase. Asp-296 contributes to the substrate binding site. Residues 311–729 (ETPKQAAVLG…AQPVGELQTA (419 aa)) are 3-hydroxyacyl-CoA dehydrogenase. NAD(+) contacts are provided by residues Met-324, Asp-343, 400–402 (VVE), Lys-407, and Ser-429. The active-site For 3-hydroxyacyl-CoA dehydrogenase activity is His-450. Position 453 (Asn-453) interacts with NAD(+). Substrate is bound by residues Asn-500 and Tyr-660. Residues 708–729 (SHNAPYYPQVEPAQPVGELQTA) form a disordered region.

In the N-terminal section; belongs to the enoyl-CoA hydratase/isomerase family. This sequence in the C-terminal section; belongs to the 3-hydroxyacyl-CoA dehydrogenase family. As to quaternary structure, heterotetramer of two alpha chains (FadB) and two beta chains (FadA).

The enzyme catalyses a (3S)-3-hydroxyacyl-CoA + NAD(+) = a 3-oxoacyl-CoA + NADH + H(+). It catalyses the reaction a (3S)-3-hydroxyacyl-CoA = a (2E)-enoyl-CoA + H2O. The catalysed reaction is a 4-saturated-(3S)-3-hydroxyacyl-CoA = a (3E)-enoyl-CoA + H2O. It carries out the reaction (3S)-3-hydroxybutanoyl-CoA = (3R)-3-hydroxybutanoyl-CoA. The enzyme catalyses a (3Z)-enoyl-CoA = a 4-saturated (2E)-enoyl-CoA. It catalyses the reaction a (3E)-enoyl-CoA = a 4-saturated (2E)-enoyl-CoA. It participates in lipid metabolism; fatty acid beta-oxidation. Its function is as follows. Involved in the aerobic and anaerobic degradation of long-chain fatty acids via beta-oxidation cycle. Catalyzes the formation of 3-oxoacyl-CoA from enoyl-CoA via L-3-hydroxyacyl-CoA. It can also use D-3-hydroxyacyl-CoA and cis-3-enoyl-CoA as substrate. The protein is Fatty acid oxidation complex subunit alpha of Cronobacter sakazakii (strain ATCC BAA-894) (Enterobacter sakazakii).